A 443-amino-acid polypeptide reads, in one-letter code: Protein king tubby (443 aa).

Disordered regions lie at residues 57 to 80 (TNGSPGGINSVAMNTSRNHSNNMR) and 98 to 191 (HELE…EGDV). Residues 67–80 (VAMNTSRNHSNNMR) are compositionally biased toward polar residues. A compositionally biased stretch (low complexity) spans 113 to 128 (QQQQSASHSANSTQSQ). S136 carries the post-translational modification Phosphoserine. A compositionally biased stretch (gly residues) spans 177-186 (NGTGNGTGGE).

This sequence belongs to the TUB family.

It is found in the cytoplasm. Its subcellular location is the nucleus. The protein localises to the cell projection. It localises to the cilium membrane. The protein resides in the rhabdomere. This Drosophila sechellia (Fruit fly) protein is Protein king tubby.